A 366-amino-acid polypeptide reads, in one-letter code: Alanine racemase (366 aa).

Catalysis depends on K35, which acts as the Proton acceptor; specific for D-alanine. K35 is subject to N6-(pyridoxal phosphate)lysine. Residue R130 participates in substrate binding. Y254 (proton acceptor; specific for L-alanine) is an active-site residue. M302 serves as a coordination point for substrate.

The protein belongs to the alanine racemase family. Pyridoxal 5'-phosphate is required as a cofactor.

It catalyses the reaction L-alanine = D-alanine. It functions in the pathway amino-acid biosynthesis; D-alanine biosynthesis; D-alanine from L-alanine: step 1/1. Its function is as follows. Catalyzes the interconversion of L-alanine and D-alanine. May also act on other amino acids. The chain is Alanine racemase (alr) from Variovorax paradoxus (strain S110).